The sequence spans 729 residues: Pentatricopeptide repeat-containing protein At4g04370 (729 aa).

PPR repeat units follow at residues 10 to 44, 45 to 79, 80 to 110, 111 to 145, 178 to 208, 209 to 243, 244 to 278, 279 to 309, 310 to 344, 345 to 379, 380 to 414, 415 to 445, 447 to 481, 482 to 512, 513 to 547, 548 to 583, and 584 to 618; these read STKY…KLLP, DTFT…GFSS, DFYI…MRER, DVVH…GIKP, DIAV…MEQR, DMVS…GLRP, DQQT…GFDV, DMHL…IPNK, DVVC…GSDL, SSEA…GYTL, DTPA…DLVS, WNAI…TVQQ, DSFT…FIRP, CSLV…ISWK, DVVS…GMEP, NHVI…GVEP, and NHEH…PSID. The type E motif stretch occupies residues 619–694; that stretch reads VLGIILDACR…LPGWSKIEMN (76 aa). The type E(+) motif stretch occupies residues 695-723; it reads GKTTTFFMNHTSHSDDTVSLLKLLSREMM.

It belongs to the PPR family. PCMP-E subfamily.

The polypeptide is Pentatricopeptide repeat-containing protein At4g04370 (PCMP-E99) (Arabidopsis thaliana (Mouse-ear cress)).